Consider the following 299-residue polypeptide: Probable lipid kinase YegS-like (299 aa).

The 132-residue stretch at 2–133 folds into the DAGKc domain; sequence ATYPESLLIL…VDIAQVNDKT (132 aa). Residues threonine 40, 66 to 72, and threonine 95 contribute to the ATP site; that span reads GDGTINE. Residues leucine 215, aspartate 218, and leucine 220 each coordinate Mg(2+). Glutamate 271 serves as the catalytic Proton acceptor.

It belongs to the diacylglycerol/lipid kinase family. YegS lipid kinase subfamily. The cofactor is Mg(2+). Ca(2+) serves as cofactor.

The protein localises to the cytoplasm. Functionally, probably phosphorylates lipids; the in vivo substrate is unknown. This chain is Probable lipid kinase YegS-like, found in Enterobacter sp. (strain 638).